We begin with the raw amino-acid sequence, 95 residues long: UPF0358 protein GK1077 (95 aa).

Belongs to the UPF0358 family.

The chain is UPF0358 protein GK1077 from Geobacillus kaustophilus (strain HTA426).